A 92-amino-acid chain; its full sequence is MIRVGLILCCIFIVGVFEASSADDILTAHNLIKRSEVKPPSSSEFVGLMGRSEELTRRLIQHPGSMSETSKRGPPKKGDFNPNELKPESNIC.

Residues 1–22 (MIRVGLILCCIFIVGVFEASSA) form the signal peptide. The propeptide occupies 23-37 (DDILTAHNLIKRSEV). M49 is modified (methionine amide). The propeptide occupies 52–92 (SEELTRRLIQHPGSMSETSKRGPPKKGDFNPNELKPESNIC). Residues 61-92 (QHPGSMSETSKRGPPKKGDFNPNELKPESNIC) form a disordered region.

It belongs to the tachykinin family. In terms of tissue distribution, expressed in the posterior salivary gland and more specifically in the mucus-secreting gland cells.

The protein localises to the secreted. Tachykinins are active peptides which excite neurons, evoke behavioral responses, are potent vasodilators and secretagogues, and contract (directly or indirectly) many smooth muscles. In Octopus vulgaris (Common octopus), this protein is Tachykinin-2.